Reading from the N-terminus, the 1296-residue chain is Protein STU1 (1296 aa).

Disordered regions lie at residues 258–287 (ATSAPVLSPPAPTTFAPTTRSQFNSSHGAD), 735–793 (LSQT…PPVT), 888–946 (ALQQ…HISA), and 953–972 (TTSHRVLSSTPSRRAPTNGV). A compositionally biased stretch (polar residues) spans 277–287 (RSQFNSSHGAD). Composition is skewed to low complexity over residues 755 to 782 (SARSRAISSSSYSSQGSSSSARMQGAAS), 900 to 919 (TISTSSTSSTNSSTTPASAS), and 933 to 946 (HSPSPSASASHISA). Positions 953–964 (TTSHRVLSSTPS) are enriched in polar residues.

This sequence belongs to the CLASP family. In terms of assembly, interacts with microtubules.

It is found in the cytoplasm. It localises to the cytoskeleton. The protein localises to the nucleus. The protein resides in the spindle. Its function is as follows. Microtubule binding protein that promotes the stabilization of dynamic microtubules. Required for mitotic spindle formation. This Mycosarcoma maydis (Corn smut fungus) protein is Protein STU1 (STU1).